A 198-amino-acid polypeptide reads, in one-letter code: Small ribosomal subunit protein uS11 (198 aa).

Composition is skewed to low complexity over residues 1–11 and 19–58; these read MSGTEAGAGEP and EAAQPEAGAPDAGTPEASAPEAGAAQPEAGTQPEAGTAQP. Disordered regions lie at residues 1–72 and 178–198; these read MSGT…TPAD and DVTPIPHDTTRKKGGKRGRRV. The span at 187–198 shows a compositional bias: basic residues; it reads TRKKGGKRGRRV.

This sequence belongs to the universal ribosomal protein uS11 family. In terms of assembly, part of the 30S ribosomal subunit.

Located on the platform of the 30S subunit. The chain is Small ribosomal subunit protein uS11 from Cenarchaeum symbiosum (strain A).